The primary structure comprises 386 residues: ADP,ATP carrier protein, mitochondrial (386 aa).

The transit peptide at 1–77 (MADMNQHPTV…SNASPVFVQA (77 aa)) directs the protein to the mitochondrion. Solcar repeat units follow at residues 84–177 (AAFA…FKRL), 189–281 (KWFA…LKPV), and 289–375 (DSFF…LQVL). Transmembrane regions (helical) follow at residues 86–113 (FATD…VKLL), 154–178 (TANV…KRLF), 187–207 (YWKW…SSLF), 257–278 (FNIS…YDSL), and 292–312 (FASF…SYPI). ADP is bound by residues Arg-159 and Lys-171. Arg-316 is an ADP binding site. Residues 316 to 321 (RRRMMM) are important for transport activity. The Nucleotide carrier signature motif motif lies at 316 to 321 (RRRMMM). Residues 352–372 (AGANILRAVAGAGVLAGYDKL) form a helical membrane-spanning segment.

Belongs to the mitochondrial carrier (TC 2.A.29) family. In terms of assembly, monomer.

It is found in the mitochondrion inner membrane. It catalyses the reaction ADP(in) + ATP(out) = ADP(out) + ATP(in). With respect to regulation, the matrix-open state (m-state) is inhibited by the membrane-permeable bongkrekic acid (BKA). The cytoplasmic-open state (c-state) is inhibited by the membrane-impermeable toxic inhibitor carboxyatractyloside (CATR). ADP:ATP antiporter that mediates import of ADP into the mitochondrial matrix for ATP synthesis, and export of ATP out to fuel the cell. Cycles between the cytoplasmic-open state (c-state) and the matrix-open state (m-state): operates by the alternating access mechanism with a single substrate-binding site intermittently exposed to either the cytosolic (c-state) or matrix (m-state) side of the inner mitochondrial membrane. This is ADP,ATP carrier protein, mitochondrial (ANT) from Solanum tuberosum (Potato).